Here is a 429-residue protein sequence, read N- to C-terminus: Formate-dependent phosphoribosylglycinamide formyltransferase (429 aa).

N(1)-(5-phospho-beta-D-ribosyl)glycinamide is bound by residues 26–27 (EL) and glutamate 86. ATP contacts are provided by residues arginine 118, lysine 159, 199–202 (EEHI), and glutamate 207. The region spanning 123-319 (ETLVKEAKVP…EFGLHLRAVL (197 aa)) is the ATP-grasp domain. Residues glutamate 276 and glutamate 288 each contribute to the Mg(2+) site. N(1)-(5-phospho-beta-D-ribosyl)glycinamide-binding positions include aspartate 295, lysine 375, and 382-383 (RR).

Belongs to the PurK/PurT family. Homodimer.

It catalyses the reaction N(1)-(5-phospho-beta-D-ribosyl)glycinamide + formate + ATP = N(2)-formyl-N(1)-(5-phospho-beta-D-ribosyl)glycinamide + ADP + phosphate + H(+). Its pathway is purine metabolism; IMP biosynthesis via de novo pathway; N(2)-formyl-N(1)-(5-phospho-D-ribosyl)glycinamide from N(1)-(5-phospho-D-ribosyl)glycinamide (formate route): step 1/1. Its function is as follows. Involved in the de novo purine biosynthesis. Catalyzes the transfer of formate to 5-phospho-ribosyl-glycinamide (GAR), producing 5-phospho-ribosyl-N-formylglycinamide (FGAR). Formate is provided by PurU via hydrolysis of 10-formyl-tetrahydrofolate. The polypeptide is Formate-dependent phosphoribosylglycinamide formyltransferase (Pyrococcus abyssi (strain GE5 / Orsay)).